We begin with the raw amino-acid sequence, 217 residues long: Salivary glue protein Sgs-3 (217 aa).

The N-terminal stretch at 1–23 (MKLTIATVLASILLIGFANVANC) is a signal peptide. The span at 45–130 (KSTSTTTTTT…KPTTHSTPKT (86 aa)) shows a compositional bias: low complexity. The interval 45-163 (KSTSTTTTTT…KHTTPTTTTT (119 aa)) is disordered. Residues 131 to 154 (KPTKHTTPKTKPTKHTTPKTKPTK) are compositionally biased toward basic residues.

This Drosophila simulans (Fruit fly) protein is Salivary glue protein Sgs-3 (Sgs3).